The chain runs to 775 residues: Acetamidase regulatory protein (775 aa).

Over residues 1-15 (MSSTAHNSQPSTGNG) the composition is skewed to polar residues. The disordered stretch occupies residues 1-20 (MSSTAHNSQPSTGNGVTKRK). Positions 26 to 59 (CIHCHRRKVRCDARIVGLPCSNCRSAGKADCRIH) form a DNA-binding region, zn(2)-C6 fungal-type. Positions 126–153 (PHSSYTNGNHLSNNRGSQPITETQTFTR) are enriched in polar residues. Disordered regions lie at residues 126-159 (PHSS…GADR) and 630-699 (ATSE…HQNQ). The segment covering 630-644 (ATSERPRRFSTHDQN) has biased composition (basic and acidic residues). A compositionally biased stretch (pro residues) spans 674–689 (PRPPYEVPTPESPRMP).

Its subcellular location is the nucleus. Positively regulates the expression of genes involved in the catabolism of certain amides, omega amino acids, and lactams. The protein is Acetamidase regulatory protein (amdR) of Aspergillus oryzae (strain ATCC 42149 / RIB 40) (Yellow koji mold).